The primary structure comprises 207 residues: Cytochrome c biogenesis ATP-binding export protein CcmA (207 aa).

Residues 4-207 (LEARELLCER…RISLTQTRAA (204 aa)) enclose the ABC transporter domain. 36–43 (GSNGAGKT) is an ATP binding site.

Belongs to the ABC transporter superfamily. CcmA exporter (TC 3.A.1.107) family. The complex is composed of two ATP-binding proteins (CcmA) and two transmembrane proteins (CcmB).

It localises to the cell inner membrane. It carries out the reaction heme b(in) + ATP + H2O = heme b(out) + ADP + phosphate + H(+). Part of the ABC transporter complex CcmAB involved in the biogenesis of c-type cytochromes; once thought to export heme, this seems not to be the case, but its exact role is uncertain. Responsible for energy coupling to the transport system. This chain is Cytochrome c biogenesis ATP-binding export protein CcmA, found in Shigella sonnei (strain Ss046).